Reading from the N-terminus, the 457-residue chain is ATP synthase subunit beta (457 aa).

Residue G147–T154 participates in ATP binding.

The protein belongs to the ATPase alpha/beta chains family. In terms of assembly, F-type ATPases have 2 components, CF(1) - the catalytic core - and CF(0) - the membrane proton channel. CF(1) has five subunits: alpha(3), beta(3), gamma(1), delta(1), epsilon(1). CF(0) has three main subunits: a(1), b(2) and c(9-12). The alpha and beta chains form an alternating ring which encloses part of the gamma chain. CF(1) is attached to CF(0) by a central stalk formed by the gamma and epsilon chains, while a peripheral stalk is formed by the delta and b chains.

The protein resides in the cell inner membrane. It carries out the reaction ATP + H2O + 4 H(+)(in) = ADP + phosphate + 5 H(+)(out). Its function is as follows. Produces ATP from ADP in the presence of a proton gradient across the membrane. The catalytic sites are hosted primarily by the beta subunits. This chain is ATP synthase subunit beta, found in Glaesserella parasuis serovar 5 (strain SH0165) (Haemophilus parasuis).